We begin with the raw amino-acid sequence, 171 residues long: Neudesin (171 aa).

Positions 1-30 (MARPAPWWRLRLLAALVLALALVPVPSAWA) are cleaved as a signal peptide. The Cytochrome b5 heme-binding domain occupies 43-128 (VRLFTEEELA…KELEALDDVF (86 aa)). The residue at position 135 (Lys135) is an N6-acetyllysine.

Belongs to the cytochrome b5 family. MAPR subfamily. As to quaternary structure, interacts with PINK1 and PARK7. In terms of tissue distribution, in the embryo, expressed most abundantly in brain and spinal cord. Widely expressed in adult tissues including brain, heart, lung and kidney. In brain, expressed in neurons but not in glial cells. In the hypothalamus is expressed primarily in the paraventricular nucleus (PVN), with lower levels of expression in the arcuate nucleus (ARC).

The protein localises to the secreted. It is found in the extracellular space. Its subcellular location is the mitochondrion. It localises to the endoplasmic reticulum. Its function is as follows. Acts as a neurotrophic factor in postnatal mature neurons, enhancing neuronal survival. Promotes cell proliferation and neurogenesis in undifferentiated neural pro-genitor cells at the embryonic stage and inhibits differentiation of astrocytes. Its neurotrophic activity is exerted via MAPK1/ERK2, MAPK3/ERK1 and AKT1/AKT pathways. Neurotrophic activity is enhanced by binding to heme. Also acts as an anorexigenic neurotrophic factor that contributes to energy balance. This chain is Neudesin, found in Mus musculus (Mouse).